The sequence spans 245 residues: Purine nucleoside phosphorylase (245 aa).

Histidine 7 serves as a coordination point for a purine D-ribonucleoside. Residues 23 to 27 (GDPGR), arginine 45, and 88 to 91 (RAGS) each bind phosphate. A purine D-ribonucleoside is bound at residue 183–184 (ME). Aspartate 206 (proton donor) is an active-site residue.

It belongs to the PNP/MTAP phosphorylase family. Homohexamer; trimer of homodimers.

The enzyme catalyses inosine + phosphate = alpha-D-ribose 1-phosphate + hypoxanthine. It catalyses the reaction guanosine + phosphate = alpha-D-ribose 1-phosphate + guanine. The catalysed reaction is 2'-deoxyguanosine + phosphate = 2-deoxy-alpha-D-ribose 1-phosphate + guanine. It carries out the reaction 2'-deoxyinosine + phosphate = 2-deoxy-alpha-D-ribose 1-phosphate + hypoxanthine. The enzyme catalyses S-methyl-5'-thioinosine + phosphate = 5-(methylsulfanyl)-alpha-D-ribose 1-phosphate + hypoxanthine. The protein operates within purine metabolism; purine nucleoside salvage. Its activity is regulated as follows. Inhibited by Immucillin-H and 5'-methylthio-Immucillin-H. Inhibited by 5'-deaza-1'-aza-2c-deoxy-1'-(9-methylene)-Immucilin-G (DADMe-ImmG). Functionally, as part of the purine salvage pathway, catalyzes the phosphorolytic breakdown of the N-glycosidic bond in the beta-(deoxy)ribonucleoside molecules, with the formation of the corresponding free purine bases and pentose-1-phosphate. Preferentially acts on inosine and guanosine, and to a lesser extent on 2'-deoxyguanosine and guanosine. Also catalyzes the phosphorylation of S-methyl-5'-thioinosine (MTI) to hypoxanthine; MTI is produced by adenosine deaminase (ADA)-mediated breakdown of S-methyl-5'-thioadenosine (MTA), a major by-product of polyamine biosynthesis. Generates hypoxanthine from both the purine salvage pathway and from polyamine metabolism which is required for nucleic acids synthesis. Has no activity towards adenosine. The polypeptide is Purine nucleoside phosphorylase (Plasmodium falciparum (isolate 3D7)).